The chain runs to 237 residues: Demethylmenaquinone methyltransferase (237 aa).

Residues Thr-58, Asp-79, and 106–107 (NA) each bind S-adenosyl-L-methionine.

This sequence belongs to the class I-like SAM-binding methyltransferase superfamily. MenG/UbiE family.

It catalyses the reaction a 2-demethylmenaquinol + S-adenosyl-L-methionine = a menaquinol + S-adenosyl-L-homocysteine + H(+). It participates in quinol/quinone metabolism; menaquinone biosynthesis; menaquinol from 1,4-dihydroxy-2-naphthoate: step 2/2. In terms of biological role, methyltransferase required for the conversion of demethylmenaquinol (DMKH2) to menaquinol (MKH2). This Bacillus cereus (strain ATCC 10987 / NRS 248) protein is Demethylmenaquinone methyltransferase.